A 462-amino-acid chain; its full sequence is Argininosuccinate lyase (462 aa).

This sequence belongs to the lyase 1 family. Argininosuccinate lyase subfamily.

The protein localises to the cytoplasm. The catalysed reaction is 2-(N(omega)-L-arginino)succinate = fumarate + L-arginine. The protein operates within amino-acid biosynthesis; L-arginine biosynthesis; L-arginine from L-ornithine and carbamoyl phosphate: step 3/3. This is Argininosuccinate lyase from Caldicellulosiruptor bescii (strain ATCC BAA-1888 / DSM 6725 / KCTC 15123 / Z-1320) (Anaerocellum thermophilum).